Here is a 146-residue protein sequence, read N- to C-terminus: Hemoglobin subunit beta (146 aa).

The region spanning 2–146 (FLTAEEKGLV…VASALAHRYH (145 aa)) is the Globin domain. Residue Ser-44 is modified to Phosphoserine. Lys-59 is modified (N6-acetyllysine). Residue His-63 participates in heme b binding. At Lys-82 the chain carries N6-acetyllysine. A heme b-binding site is contributed by His-92. Cys-93 bears the S-nitrosocysteine mark.

Belongs to the globin family. As to quaternary structure, heterotetramer of two alpha chains and two beta chains. Red blood cells.

Functionally, involved in oxygen transport from the lung to the various peripheral tissues. This is Hemoglobin subunit beta (HBB) from Paguma larvata (Masked palm civet).